Reading from the N-terminus, the 255-residue chain is MKTIAVNSFKGGTAKTSTTLHLGAALAQYHKARVLLIDFDAQANLTAGLGLDPDCYDSLAVVLQGEKNIEEVIRPIDSSGLDLIPADTWLERVEVSGSLAADRYSHERLKIILSKIEHRYDYVIIDTPPSLCWLTESALIAAQHALICATPEFYSVKGLERLATFIQGISSRHPLNILGVTLSFWNYRGKNNAAFTELIQKTFPGKLLNTRIRRDITISEAAIHGKPVFSTAPSARASEDYLKLTEELLFLLRNI.

Belongs to the ParA family.

The polypeptide is ParA family protein CT_582 (Chlamydia trachomatis serovar D (strain ATCC VR-885 / DSM 19411 / UW-3/Cx)).